We begin with the raw amino-acid sequence, 345 residues long: Mycothiol acetyltransferase (345 aa).

N-acetyltransferase domains lie at 6-149 and 164-345; these read DTYE…KAME and FEVL…RGRL. Glu-39 serves as a coordination point for 1D-myo-inositol 2-(L-cysteinylamino)-2-deoxy-alpha-D-glucopyranoside. Acetyl-CoA is bound at residue 76 to 78; the sequence is LAV. Residues Glu-198, Lys-261, and Glu-277 each coordinate 1D-myo-inositol 2-(L-cysteinylamino)-2-deoxy-alpha-D-glucopyranoside. Acetyl-CoA contacts are provided by residues 281-283 and 288-294; these read VCL and RGRGLGQ. Position 315 (Tyr-315) interacts with 1D-myo-inositol 2-(L-cysteinylamino)-2-deoxy-alpha-D-glucopyranoside.

It belongs to the acetyltransferase family. MshD subfamily. In terms of assembly, monomer.

The enzyme catalyses 1D-myo-inositol 2-(L-cysteinylamino)-2-deoxy-alpha-D-glucopyranoside + acetyl-CoA = mycothiol + CoA + H(+). In terms of biological role, catalyzes the transfer of acetyl from acetyl-CoA to desacetylmycothiol (Cys-GlcN-Ins) to form mycothiol. This Corynebacterium jeikeium (strain K411) protein is Mycothiol acetyltransferase.